Consider the following 151-residue polypeptide: uncharacterized protein (151 aa).

The tract at residues 1-77 (MSLLGGMWKS…LGSNPISSSR (77 aa)) is disordered. 2 stretches are compositionally biased toward low complexity: residues 19–54 (PKPS…RSSN) and 63–76 (SISG…ISSS).

This is an uncharacterized protein from Methanothermobacter marburgensis (strain ATCC BAA-927 / DSM 2133 / JCM 14651 / NBRC 100331 / OCM 82 / Marburg) (Methanobacterium thermoautotrophicum).